The primary structure comprises 395 residues: Vibriobactin-specific isochorismate synthase (395 aa).

This sequence belongs to the isochorismate synthase family.

It catalyses the reaction chorismate = isochorismate. Its pathway is siderophore biosynthesis; vibriobactin biosynthesis. The protein is Vibriobactin-specific isochorismate synthase (vibC) of Vibrio cholerae serotype O1 (strain ATCC 39315 / El Tor Inaba N16961).